Here is a 440-residue protein sequence, read N- to C-terminus: UDP-N-acetylmuramoylalanine--D-glutamate ligase (440 aa).

An ATP-binding site is contributed by 115–121; it reads GSNGKST.

Belongs to the MurCDEF family.

It is found in the cytoplasm. The enzyme catalyses UDP-N-acetyl-alpha-D-muramoyl-L-alanine + D-glutamate + ATP = UDP-N-acetyl-alpha-D-muramoyl-L-alanyl-D-glutamate + ADP + phosphate + H(+). It participates in cell wall biogenesis; peptidoglycan biosynthesis. Functionally, cell wall formation. Catalyzes the addition of glutamate to the nucleotide precursor UDP-N-acetylmuramoyl-L-alanine (UMA). The polypeptide is UDP-N-acetylmuramoylalanine--D-glutamate ligase (Vibrio cholerae serotype O1 (strain ATCC 39315 / El Tor Inaba N16961)).